The sequence spans 295 residues: Zinc finger CCCH domain-containing protein 44 (295 aa).

Positions 1 to 31 are disordered; it reads MEAGGGKRAAPEGTNGAAKRARASESSQVGV. C3H1-type zinc fingers lie at residues 32-60 and 98-126; these read GSKLKPCTKFFSTSGCPFGSSCHFLHNFP and SVKTRMCNKYNTAEGCKWGSKCHFAHGER. Positions 166–230 constitute a KH domain; it reads SATAKISVDA…DQIKHASAMV (65 aa). The C3H1-type 3 zinc finger occupies 259–286; it reads NFKTKLCENFNKGSCTFGDRCHFAHGES.

The chain is Zinc finger CCCH domain-containing protein 44 from Oryza sativa subsp. japonica (Rice).